The following is a 176-amino-acid chain: Small capsomere-interacting protein (176 aa).

2 disordered regions span residues D75–G109 and A148–Q176. Residues A80–G109 show a composition bias toward low complexity.

Belongs to the herpesviridae small capsomere-interacting protein family. Interacts with the major capsid protein/MCP.

It is found in the virion. Its subcellular location is the host nucleus. In terms of biological role, participates in the assembly of the infectious particles by decorating the outer surface of the capsid shell and thus forming a layer between the capsid and the tegument. Complexes composed of the major capsid protein and small capsomere-interacting protein/SCP assemble together in the host cytoplasm and are translocated to the nucleus, where they accumulate and participate in capsid assembly. In Epstein-Barr virus (strain B95-8) (HHV-4), this protein is Small capsomere-interacting protein.